The sequence spans 151 residues: Myosin catalytic light chain, smooth muscle (151 aa).

Position 1 is an N-acetylalanine (Ala-1). EF-hand domains are found at residues 6 to 41, 83 to 118, and 119 to 151; these read DRIT…LGQN, GSYE…LGEK, and MSEE…LLEG.

Functionally, in molluscan muscle, calcium regulation is associated with myosin rather than with actin. Muscle myosin contains two types of light chains: the catalytic light chain, essential for ATPase activity, and the regulatory light chain, a calcium-binding protein responsible for Ca(2+) dependent binding and Ca(2+) dependent Mg-ATPase activity. The polypeptide is Myosin catalytic light chain, smooth muscle (Halocynthia roretzi (Sea squirt)).